We begin with the raw amino-acid sequence, 430 residues long: Serine--tRNA ligase (430 aa).

237 to 239 contacts L-serine; sequence TAE. 268 to 270 contacts ATP; it reads RAE. Glu291 contributes to the L-serine binding site. 355–358 provides a ligand contact to ATP; that stretch reads EVSS. Residue Ser391 coordinates L-serine.

The protein belongs to the class-II aminoacyl-tRNA synthetase family. Type-1 seryl-tRNA synthetase subfamily. In terms of assembly, homodimer. The tRNA molecule binds across the dimer.

The protein localises to the cytoplasm. The enzyme catalyses tRNA(Ser) + L-serine + ATP = L-seryl-tRNA(Ser) + AMP + diphosphate + H(+). It catalyses the reaction tRNA(Sec) + L-serine + ATP = L-seryl-tRNA(Sec) + AMP + diphosphate + H(+). Its pathway is aminoacyl-tRNA biosynthesis; selenocysteinyl-tRNA(Sec) biosynthesis; L-seryl-tRNA(Sec) from L-serine and tRNA(Sec): step 1/1. Catalyzes the attachment of serine to tRNA(Ser). Is also able to aminoacylate tRNA(Sec) with serine, to form the misacylated tRNA L-seryl-tRNA(Sec), which will be further converted into selenocysteinyl-tRNA(Sec). This chain is Serine--tRNA ligase, found in Baumannia cicadellinicola subsp. Homalodisca coagulata.